The following is a 1302-amino-acid chain: Zinc finger protein 536 (1302 aa).

The disordered stretch occupies residues M1–L26. 7 consecutive C2H2-type zinc fingers follow at residues Y130–H152, F158–H180, F274–H297, Y300–H323, F345–H367, H373–H395, and T631–H653. Residues S650 to G736 are disordered. Over residues R657 to S676 the composition is skewed to basic and acidic residues. Polar residues predominate over residues G677 to E698. C2H2-type zinc fingers lie at residues K753–H775 and Y781–H803. Disordered stretches follow at residues H804–P832, G855–S897, K935–L988, and N1133–K1261. Phosphoserine is present on residues S828 and S829. The segment covering G869 to S883 has biased composition (polar residues). Residues K935 to Q973 are compositionally biased toward basic and acidic residues. Composition is skewed to acidic residues over residues D1161–M1171 and N1179–P1188. Residues L1198–S1212 are compositionally biased toward low complexity.

It belongs to the krueppel C2H2-type zinc-finger protein family. Expressed predominantly in the brain, while a weak signal is also detected in the heart and testis. Expression is abundant in neuronal cells of the cerebral cortex, hippocampus and hypothalamic area (at protein level).

The protein resides in the nucleus. In terms of biological role, transcriptional repressor that negatively regulates neuron differentiation by repressing retinoic acid-induced gene transcription. Binds and interrupts RARA from binding to retinoic acid response elements (RARE) composed of tandem 5'-AGGTCA-3' sites known as DR1-DR5. Recognizes and binds 2 copies of the core DNA sequence 5'-CCCCCA-3'. This chain is Zinc finger protein 536 (Znf536), found in Mus musculus (Mouse).